The sequence spans 703 residues: Probable ATP-dependent RNA helicase DHX35 (703 aa).

The Helicase ATP-binding domain occupies 64-229; the sequence is LYLIENYQTV…FNQNETSDPA (166 aa). Residue 77 to 84 coordinates ATP; sequence GETGCGKS. The short motif at 176–179 is the DEAH box element; the sequence is DEAH. In terms of domain architecture, Helicase C-terminal spans 261 to 438; sequence TVETVVKIHQ…PVILQLKALG (178 aa).

It belongs to the DEAD box helicase family. DEAH subfamily. Identified in the spliceosome C complex.

The catalysed reaction is ATP + H2O = ADP + phosphate + H(+). Functionally, may be involved in pre-mRNA splicing. The polypeptide is Probable ATP-dependent RNA helicase DHX35 (DHX35) (Homo sapiens (Human)).